The following is a 457-amino-acid chain: MERTTLRRRALVAGTATVAVGALALAGLTGVASADPAATAAPPVSADSLSPGMLAALERDLGLDEDAARSRIANEYRAAAVAAGLEKSLGARYAGARVSGAKATLTVATTDASEAARITEAGARAEVVGHSLDRFEGVKKSLDKAALDKAPKNVPVWYVDVAANRVVVNAASPAAGQAFLKVAGVDRGLVTVARSAEQPRALADIRGGDAYYMNGSGRCSVGFSVTRGTQNGFATAGHCGRVGTTTNGVNQQAQGTFQGSTFPGRDIAWVATNANWTPRPLVNGYGRGDVTVAGSTASVVGASVCRSGSTTGWHCGTIQQLNTSVTYPEGTISGVTRTSVCAEPGDSGGSYISGSQAQGVTSGGSGNCSSGGTTYFQPINPLLQAYGLTLVTSGGGTPTDPPTTPPTDSPGGTWAVGTAYAAGATVTYGGATYRCLQAHTAQPGWTPADVPALWQRV.

Residues 1–34 constitute a signal peptide (tat-type signal); that stretch reads MERTTLRRRALVAGTATVAVGALALAGLTGVASA. The propeptide occupies 35-202; the sequence is DPAATAAPPV…ARSAEQPRAL (168 aa). Residues 203 to 393 are catalytic; the sequence is ADIRGGDAYY…QAYGLTLVTS (191 aa). Cys219 and Cys239 are disulfide-bonded. Catalysis depends on charge relay system residues His238 and Asp266. 2 cysteine pairs are disulfide-bonded: Cys305/Cys315 and Cys341/Cys368. Ser347 functions as the Charge relay system in the catalytic mechanism. Positions 393–412 are disordered; the sequence is SGGGTPTDPPTTPPTDSPGG. A linker region spans residues 394-413; that stretch reads GGGTPTDPPTTPPTDSPGGT. The span at 399–408 shows a compositional bias: pro residues; that stretch reads TDPPTTPPTD. The Chitin-binding type-3 domain occupies 415–457; that stretch reads AVGTAYAAGATVTYGGATYRCLQAHTAQPGWTPADVPALWQRV.

It belongs to the peptidase S1 family. As to quaternary structure, monomer. Post-translationally, predicted to be exported by the Tat system. The position of the signal peptide cleavage has not been experimentally proven.

In terms of biological role, hydrolysis of proteins with specificity similar to chymotrypsin. May be specialized for the degradation of chitin-linked proteins. Has a primary specificity for large aliphatic or aromatic amino acids. The chain is Streptogrisin-C (sprC) from Streptomyces griseus.